Reading from the N-terminus, the 142-residue chain is Large ribosomal subunit protein bL17 (142 aa).

Belongs to the bacterial ribosomal protein bL17 family. As to quaternary structure, part of the 50S ribosomal subunit. Contacts protein L32.

This Chlamydia pneumoniae (Chlamydophila pneumoniae) protein is Large ribosomal subunit protein bL17.